A 104-amino-acid chain; its full sequence is uncharacterized protein (104 aa).

Belongs to the BolA/IbaG family.

This is an uncharacterized protein from Buchnera aphidicola subsp. Acyrthosiphon pisum (strain APS) (Acyrthosiphon pisum symbiotic bacterium).